A 100-amino-acid chain; its full sequence is UPF0213 protein YhbQ (100 aa).

Positions 2–77 (TPWYLYLIRT…KQLTKRQKER (76 aa)) constitute a GIY-YIG domain.

The protein belongs to the UPF0213 family.

This chain is UPF0213 protein YhbQ, found in Salmonella arizonae (strain ATCC BAA-731 / CDC346-86 / RSK2980).